A 257-amino-acid chain; its full sequence is UPF0246 protein RSc2009 (257 aa).

The protein belongs to the UPF0246 family.

The chain is UPF0246 protein RSc2009 from Ralstonia nicotianae (strain ATCC BAA-1114 / GMI1000) (Ralstonia solanacearum).